Reading from the N-terminus, the 374-residue chain is Alanine racemase (374 aa).

Catalysis depends on Lys35, which acts as the Proton acceptor; specific for D-alanine. At Lys35 the chain carries N6-(pyridoxal phosphate)lysine. Residue Arg133 participates in substrate binding. The active-site Proton acceptor; specific for L-alanine is Tyr261. Residue Met315 coordinates substrate.

It belongs to the alanine racemase family. Pyridoxal 5'-phosphate is required as a cofactor.

It catalyses the reaction L-alanine = D-alanine. It functions in the pathway amino-acid biosynthesis; D-alanine biosynthesis; D-alanine from L-alanine: step 1/1. Catalyzes the interconversion of L-alanine and D-alanine. May also act on other amino acids. The sequence is that of Alanine racemase (alr) from Psychrobacter sp. (strain PRwf-1).